Here is a 95-residue protein sequence, read N- to C-terminus: Aspartyl/glutamyl-tRNA(Asn/Gln) amidotransferase subunit C (95 aa).

This sequence belongs to the GatC family. As to quaternary structure, heterotrimer of A, B and C subunits.

The enzyme catalyses L-glutamyl-tRNA(Gln) + L-glutamine + ATP + H2O = L-glutaminyl-tRNA(Gln) + L-glutamate + ADP + phosphate + H(+). It catalyses the reaction L-aspartyl-tRNA(Asn) + L-glutamine + ATP + H2O = L-asparaginyl-tRNA(Asn) + L-glutamate + ADP + phosphate + 2 H(+). Its function is as follows. Allows the formation of correctly charged Asn-tRNA(Asn) or Gln-tRNA(Gln) through the transamidation of misacylated Asp-tRNA(Asn) or Glu-tRNA(Gln) in organisms which lack either or both of asparaginyl-tRNA or glutaminyl-tRNA synthetases. The reaction takes place in the presence of glutamine and ATP through an activated phospho-Asp-tRNA(Asn) or phospho-Glu-tRNA(Gln). The chain is Aspartyl/glutamyl-tRNA(Asn/Gln) amidotransferase subunit C from Methylobacillus flagellatus (strain ATCC 51484 / DSM 6875 / VKM B-1610 / KT).